A 201-amino-acid chain; its full sequence is Large ribosomal subunit protein bL25 (201 aa).

Belongs to the bacterial ribosomal protein bL25 family. CTC subfamily. Part of the 50S ribosomal subunit; part of the 5S rRNA/L5/L18/L25 subcomplex. Contacts the 5S rRNA. Binds to the 5S rRNA independently of L5 and L18.

This is one of the proteins that binds to the 5S RNA in the ribosome where it forms part of the central protuberance. The polypeptide is Large ribosomal subunit protein bL25 (Burkholderia lata (strain ATCC 17760 / DSM 23089 / LMG 22485 / NCIMB 9086 / R18194 / 383)).